The sequence spans 87 residues: Acyl-CoA-binding protein (87 aa).

The ACB domain maps to 2–87 (VSQLFEEKAK…VDQLIAKYSS (86 aa)). An acyl-CoA-binding positions include 29–33 (YALYK), Lys51, and Lys55. Residue Lys51 forms a Glycyl lysine isopeptide (Lys-Gly) (interchain with G-Cter in ubiquitin) linkage. Residue Lys72 forms a Glycyl lysine isopeptide (Lys-Gly) (interchain with G-Cter in ubiquitin) linkage. Tyr74 provides a ligand contact to an acyl-CoA.

This sequence belongs to the ACBP family.

In terms of biological role, binds medium- and long-chain acyl-CoA esters with very high affinity and may function as an intracellular carrier of acyl-CoA esters. Enhances the in vitro activity of the ceramide synthase complex. This Saccharomyces cerevisiae (strain ATCC 204508 / S288c) (Baker's yeast) protein is Acyl-CoA-binding protein (ACB1).